A 599-amino-acid chain; its full sequence is Elongation factor 4 (599 aa).

The 183-residue stretch at S5–E187 folds into the tr-type G domain. Residues D17–T22 and N134–D137 contribute to the GTP site.

This sequence belongs to the TRAFAC class translation factor GTPase superfamily. Classic translation factor GTPase family. LepA subfamily.

It is found in the cell inner membrane. The catalysed reaction is GTP + H2O = GDP + phosphate + H(+). In terms of biological role, required for accurate and efficient protein synthesis under certain stress conditions. May act as a fidelity factor of the translation reaction, by catalyzing a one-codon backward translocation of tRNAs on improperly translocated ribosomes. Back-translocation proceeds from a post-translocation (POST) complex to a pre-translocation (PRE) complex, thus giving elongation factor G a second chance to translocate the tRNAs correctly. Binds to ribosomes in a GTP-dependent manner. In Pseudomonas entomophila (strain L48), this protein is Elongation factor 4.